The following is an 811-amino-acid chain: Probable disease resistance protein At5g04720 (811 aa).

Positions 1 to 147 (MADIIGGEVV…KVDSLNEKLG (147 aa)) constitute an RPW8 domain. 2 NB-ARC domains span residues 180–242 (VGLD…VSQS) and 312–437 (TYDV…NVLV). 207 to 214 (GMSGSGKT) serves as a coordination point for ATP. 5 LRR repeats span residues 650–674 (FPKL…ICGI), 676–699 (SLNS…SKLK), 700–722 (ALQL…ICEL), 724–746 (RLKY…IGKV), and 748–769 (TLEK…VVLL).

Belongs to the disease resistance NB-LRR family.

Probable disease resistance protein. The sequence is that of Probable disease resistance protein At5g04720 from Arabidopsis thaliana (Mouse-ear cress).